Consider the following 593-residue polypeptide: Melanopsin-A (593 aa).

The Extracellular segment spans residues 1–77; sequence MMSGAAHSVR…VDVPDHAHYT (77 aa). Residues 78–98 form a helical membrane-spanning segment; sequence IGAVILTVGITGMLGNFLVIY. At 99–112 the chain is on the cytoplasmic side; it reads AFSRSRTLRTPANL. Residues 113 to 133 traverse the membrane as a helical segment; it reads FIINLAITDFLMCATQAPIFF. At 134–150 the chain is on the extracellular side; sequence TTSMHKRWIFGEKGCEL. An intrachain disulfide couples Cys-148 to Cys-226. The chain crosses the membrane as a helical span at residues 151 to 171; it reads YAFCGALFGICSMITLMVIAV. The Cytoplasmic segment spans residues 172-191; that stretch reads DRYFVITRPLASIGVLSQKR. Residues 192–212 traverse the membrane as a helical segment; it reads ALLILLVAWVYSLGWSLPPFF. Topologically, residues 213 to 243 are extracellular; it reads GWSAYVPEGLLTSCTWDYMTFTPSVRAYTML. A helical transmembrane segment spans residues 244–264; that stretch reads LFIFVFFIPLIVIIYCYFFIF. The Cytoplasmic segment spans residues 265-300; that stretch reads RSIRTTNEAVGKINGDNKRDSMKRFQRLKNEWKMAK. Residues 301–321 form a helical membrane-spanning segment; that stretch reads IALIVILMYVISWSPYSTVAL. Residues 322–336 are Extracellular-facing; sequence TAFAGYSDFLTPYMN. A helical transmembrane segment spans residues 337 to 357; sequence SVPAVIAKASAIHNPIIYAIT. Lys-344 bears the N6-(retinylidene)lysine mark. The Cytoplasmic segment spans residues 358 to 593; sequence HPKYRLAIAK…HIDNHRPQYL (236 aa). 2 disordered regions span residues 397-449 and 547-593; these read TVTS…RQVS and RSNV…PQYL. A compositionally biased stretch (polar residues) spans 414–449; that stretch reads TGKSRLSSASDSESGWTDTEADLSSMSSRPASRQVS. Positions 581-593 are enriched in basic and acidic residues; that stretch reads ESGHIDNHRPQYL.

Belongs to the G-protein coupled receptor 1 family. Opsin subfamily.

It localises to the cell membrane. Photoreceptor implicated in non-image-forming responses to light. May be able to isomerize covalently bound all-trans retinal back to 11-cis retinal. This Danio rerio (Zebrafish) protein is Melanopsin-A (opn4a).